Reading from the N-terminus, the 253-residue chain is UPF0758 protein Bxeno_A3578 (253 aa).

The MPN domain maps to 131-253; the sequence is LINSPEAVEN…VYSFARAGWP (123 aa). His202, His204, and Asp215 together coordinate Zn(2+). The JAMM motif signature appears at 202–215; it reads HNHPSGAVQPSASD.

The protein belongs to the UPF0758 family.

The polypeptide is UPF0758 protein Bxeno_A3578 (Paraburkholderia xenovorans (strain LB400)).